The following is a 313-amino-acid chain: Acetaldehyde dehydrogenase 1 (313 aa).

Position 16–19 (16–19 (SGNI)) interacts with NAD(+). Catalysis depends on Cys131, which acts as the Acyl-thioester intermediate. NAD(+)-binding positions include 162–170 (SAGPGTRAN) and Asn281.

Belongs to the acetaldehyde dehydrogenase family.

It catalyses the reaction acetaldehyde + NAD(+) + CoA = acetyl-CoA + NADH + H(+). In Mycobacterium sp. (strain JLS), this protein is Acetaldehyde dehydrogenase 1.